Reading from the N-terminus, the 400-residue chain is Lysophospholipid transporter LplT (400 aa).

Helical transmembrane passes span 19–39, 53–73, 91–111, 139–159, 164–184, 195–213, 227–247, 257–277, 281–301, 304–324, 352–372, and 373–393; these read VIVA…ATLA, VLQM…GQIA, AGAA…LVGI, LMEA…GVLA, IAAL…NLFI, SWRL…VVLW, LFWG…PVAL, YLNA…AKLV, TVSR…IFSL, ALLP…FFVV, NSAM…GVPA, and VAIG…LWIW.

Belongs to the major facilitator superfamily. LplT (TC 2.A.1.42) family.

The protein localises to the cell inner membrane. Functionally, catalyzes the facilitated diffusion of 2-acyl-glycero-3-phosphoethanolamine (2-acyl-GPE) into the cell. In Salmonella agona (strain SL483), this protein is Lysophospholipid transporter LplT.